The following is a 343-amino-acid chain: Dihydroorotase (343 aa).

Residues His-14 and His-16 each contribute to the Zn(2+) site. Substrate contacts are provided by residues 16–18 and Asn-42; that span reads HLR. The Zn(2+) site is built by Lys-100, His-137, and His-175. Position 100 is an N6-carboxylysine (Lys-100). Position 137 (His-137) interacts with substrate. Leu-220 contributes to the substrate binding site. Asp-248 is a binding site for Zn(2+). Residue Asp-248 is part of the active site. Positions 252 and 264 each coordinate substrate.

This sequence belongs to the metallo-dependent hydrolases superfamily. DHOase family. Class II DHOase subfamily. In terms of assembly, homodimer. Zn(2+) is required as a cofactor.

The enzyme catalyses (S)-dihydroorotate + H2O = N-carbamoyl-L-aspartate + H(+). It participates in pyrimidine metabolism; UMP biosynthesis via de novo pathway; (S)-dihydroorotate from bicarbonate: step 3/3. Catalyzes the reversible cyclization of carbamoyl aspartate to dihydroorotate. The polypeptide is Dihydroorotase (Parasynechococcus marenigrum (strain WH8102)).